The following is a 428-amino-acid chain: MLDPKFLRNELAVTAERLATRGFILDVAHLTQLEEKRKSLQVATEELQASRNAISKSIGQAKARGEDVDAIMAQVGDLGAQLDAKKVELAAVLEEVNAIAMSMPNLPDESAPIGADETENVEVRRWGSPRSFDFPIKDHIDLGEGLNGLDFKSAVKITGSRFIVMKGQIARLNRALGQFMLDLHTTEHGYTEAYVPLLVNEASLLGTGQLPKFGEDLFHTKPATEEGQGLSLIPTAEVPLTNLVRDSIVDEDELPIKLTAHTACFRSEAGSYGKDTRGLIRQHQFDKVELVQLVKPEDSMAALEVLTGHAETVLQRLGLPYRTVVLCTGDMGFGSSKTYDIEVWLPGQNTYREISSCSNMKDFQARRMQARYRVKADNKPVLLHTLNGSGLAVGRTLVAILENYQNADGSVTVPEALRPYMGGLTQIG.

Residue 235–237 (TAE) coordinates L-serine. 266-268 (RSE) serves as a coordination point for ATP. E289 lines the L-serine pocket. ATP is bound at residue 353-356 (EISS). Residue S389 coordinates L-serine.

The protein belongs to the class-II aminoacyl-tRNA synthetase family. Type-1 seryl-tRNA synthetase subfamily. In terms of assembly, homodimer. The tRNA molecule binds across the dimer.

It is found in the cytoplasm. It carries out the reaction tRNA(Ser) + L-serine + ATP = L-seryl-tRNA(Ser) + AMP + diphosphate + H(+). It catalyses the reaction tRNA(Sec) + L-serine + ATP = L-seryl-tRNA(Sec) + AMP + diphosphate + H(+). It participates in aminoacyl-tRNA biosynthesis; selenocysteinyl-tRNA(Sec) biosynthesis; L-seryl-tRNA(Sec) from L-serine and tRNA(Sec): step 1/1. Catalyzes the attachment of serine to tRNA(Ser). Is also able to aminoacylate tRNA(Sec) with serine, to form the misacylated tRNA L-seryl-tRNA(Sec), which will be further converted into selenocysteinyl-tRNA(Sec). In Shewanella oneidensis (strain ATCC 700550 / JCM 31522 / CIP 106686 / LMG 19005 / NCIMB 14063 / MR-1), this protein is Serine--tRNA ligase.